Here is a 285-residue protein sequence, read N- to C-terminus: Guanylate kinase 2, chloroplastic/mitochondrial (285 aa).

A compositionally biased stretch (low complexity) spans 1-19; that stretch reads MLLTRRFSSALARSPLLPR. The N-terminal 42 residues, 1 to 42, are a transit peptide targeting the chloroplast and mitochondrion; sequence MLLTRRFSSALARSPLLPRSLPPPRAVPATPPAPRPPPRRLM. The interval 1–66 is disordered; the sequence is MLLTRRFSSA…PPPPSGADKD (66 aa). The span at 20–36 shows a compositional bias: pro residues; that stretch reads SLPPPRAVPATPPAPRP. The span at 40–50 shows a compositional bias: low complexity; sequence RLMSSSSSGWH. A Guanylate kinase-like domain is found at 91–272; sequence PMILVISGPS…AVKQVESIID (182 aa). 98-105 is a binding site for ATP; that stretch reads GPSGVGKD. Active-site residues include arginine 130, arginine 224, and arginine 235. Residue asparagine 255 coordinates ATP.

It belongs to the guanylate kinase family. In terms of assembly, monomer.

It localises to the plastid. The protein localises to the chloroplast. The protein resides in the mitochondrion. The catalysed reaction is GMP + ATP = GDP + ADP. Functionally, essential for recycling GMP and indirectly, cGMP. Essential for chloroplast differentiation at early stage of leaf development. May not be involved in the synthesis and maintenance of the organellar DNA during leaf development. This chain is Guanylate kinase 2, chloroplastic/mitochondrial (V2), found in Oryza sativa subsp. japonica (Rice).